A 385-amino-acid polypeptide reads, in one-letter code: Digeranylgeranylglycerophospholipid reductase 2 (385 aa).

Positions 13, 32, 43, 44, 46, 95, 119, 273, 285, and 286 each coordinate FAD.

It belongs to the geranylgeranyl reductase family. DGGGPL reductase subfamily. The cofactor is FAD.

It catalyses the reaction a 2,3-bis-O-phytanyl-sn-glycerol 1-phospholipid + 8 A = a 2,3-bis-O-(geranylgeranyl)-sn-glycerol 1-phospholipid + 8 AH2. The enzyme catalyses 2,3-bis-O-(phytanyl)-sn-glycerol 1-phosphate + 8 A = 2,3-bis-O-(geranylgeranyl)-sn-glycerol 1-phosphate + 8 AH2. The catalysed reaction is CDP-2,3-bis-O-(geranylgeranyl)-sn-glycerol + 8 AH2 = CDP-2,3-bis-O-(phytanyl)-sn-glycerol + 8 A. It carries out the reaction archaetidylserine + 8 AH2 = 2,3-bis-O-phytanyl-sn-glycero-3-phospho-L-serine + 8 A. It participates in membrane lipid metabolism; glycerophospholipid metabolism. Its function is as follows. Is involved in the reduction of 2,3-digeranylgeranylglycerophospholipids (unsaturated archaeols) into 2,3-diphytanylglycerophospholipids (saturated archaeols) in the biosynthesis of archaeal membrane lipids. Catalyzes the formation of archaetidic acid (2,3-di-O-phytanyl-sn-glyceryl phosphate) from 2,3-di-O-geranylgeranylglyceryl phosphate (DGGGP) via the hydrogenation of each double bond of the isoprenoid chains. Is also probably able to reduce double bonds of geranyl groups in CDP-2,3-bis-O-(geranylgeranyl)-sn-glycerol and archaetidylserine, thus acting at various stages in the biosynthesis of archaeal membrane lipids. The protein is Digeranylgeranylglycerophospholipid reductase 2 of Methanothermobacter thermautotrophicus (strain ATCC 29096 / DSM 1053 / JCM 10044 / NBRC 100330 / Delta H) (Methanobacterium thermoautotrophicum).